The following is a 576-amino-acid chain: Septation ring formation regulator EzrA (576 aa).

The Extracellular portion of the chain corresponds to 1 to 7 (MSSTVII). The helical transmembrane segment at 8–26 (LIVVLLVILVAFYAFAILM) threads the bilayer. Over 27–576 (RKKTEDRILA…FKNKPTPDYL (550 aa)) the chain is Cytoplasmic. 2 coiled-coil regions span residues 105-134 (RARE…VAQL) and 277-301 (EQFE…LYAI).

This sequence belongs to the EzrA family.

Its subcellular location is the cell membrane. Negative regulator of FtsZ ring formation; modulates the frequency and position of FtsZ ring formation. Inhibits FtsZ ring formation at polar sites. Interacts either with FtsZ or with one of its binding partners to promote depolymerization. In Lactococcus lactis subsp. lactis (strain IL1403) (Streptococcus lactis), this protein is Septation ring formation regulator EzrA.